The primary structure comprises 410 residues: Elongation factor Tu (410 aa).

The 210-residue stretch at 10–219 (KTHVNVGTIG…ALDTYIPDPV (210 aa)) folds into the tr-type G domain. GTP-binding positions include 19–26 (GHVDHGKT), 88–92 (DCPGH), and 143–146 (NKCD). Threonine 26 lines the Mg(2+) pocket.

The protein belongs to the TRAFAC class translation factor GTPase superfamily. Classic translation factor GTPase family. EF-Tu/EF-1A subfamily. In terms of assembly, monomer.

It localises to the cytoplasm. It catalyses the reaction GTP + H2O = GDP + phosphate + H(+). In terms of biological role, GTP hydrolase that promotes the GTP-dependent binding of aminoacyl-tRNA to the A-site of ribosomes during protein biosynthesis. The polypeptide is Elongation factor Tu (Brachyspira hyodysenteriae (Treponema hyodysenteriae)).